Reading from the N-terminus, the 204-residue chain is Lipoprotein signal peptidase (204 aa).

Positions methionine 1–threonine 42 are disordered. Residues glycine 20–threonine 42 show a composition bias toward basic and acidic residues. Helical transmembrane passes span valine 50–valine 70, phenylalanine 100–alanine 120, and leucine 126–leucine 146. Active-site residues include aspartate 163 and aspartate 177. Residues phenylalanine 170–leucine 190 traverse the membrane as a helical segment.

This sequence belongs to the peptidase A8 family.

It is found in the cell membrane. It carries out the reaction Release of signal peptides from bacterial membrane prolipoproteins. Hydrolyzes -Xaa-Yaa-Zaa-|-(S,diacylglyceryl)Cys-, in which Xaa is hydrophobic (preferably Leu), and Yaa (Ala or Ser) and Zaa (Gly or Ala) have small, neutral side chains.. It functions in the pathway protein modification; lipoprotein biosynthesis (signal peptide cleavage). In terms of biological role, this protein specifically catalyzes the removal of signal peptides from prolipoproteins. The sequence is that of Lipoprotein signal peptidase from Streptomyces coelicolor (strain ATCC BAA-471 / A3(2) / M145).